Reading from the N-terminus, the 155-residue chain is SsrA-binding protein (155 aa).

This sequence belongs to the SmpB family.

It localises to the cytoplasm. Required for rescue of stalled ribosomes mediated by trans-translation. Binds to transfer-messenger RNA (tmRNA), required for stable association of tmRNA with ribosomes. tmRNA and SmpB together mimic tRNA shape, replacing the anticodon stem-loop with SmpB. tmRNA is encoded by the ssrA gene; the 2 termini fold to resemble tRNA(Ala) and it encodes a 'tag peptide', a short internal open reading frame. During trans-translation Ala-aminoacylated tmRNA acts like a tRNA, entering the A-site of stalled ribosomes, displacing the stalled mRNA. The ribosome then switches to translate the ORF on the tmRNA; the nascent peptide is terminated with the 'tag peptide' encoded by the tmRNA and targeted for degradation. The ribosome is freed to recommence translation, which seems to be the essential function of trans-translation. In Lactococcus lactis subsp. cremoris (strain MG1363), this protein is SsrA-binding protein.